The following is a 510-amino-acid chain: Crotonobetaine/carnitine--CoA ligase (510 aa).

This sequence belongs to the ATP-dependent AMP-binding enzyme family.

The enzyme catalyses 4-(trimethylamino)butanoate + ATP + CoA = 4-(trimethylamino)butanoyl-CoA + AMP + diphosphate. The catalysed reaction is crotonobetaine + ATP + CoA = crotonobetainyl-CoA + AMP + diphosphate. It carries out the reaction (R)-carnitine + ATP + CoA = (R)-carnitinyl-CoA + AMP + diphosphate. It participates in amine and polyamine metabolism; carnitine metabolism. In terms of biological role, catalyzes the transfer of CoA to carnitine, generating the initial carnitinyl-CoA needed for the CaiB reaction cycle. Also has activity toward crotonobetaine and gamma-butyrobetaine. The sequence is that of Crotonobetaine/carnitine--CoA ligase from Shigella flexneri serotype 5b (strain 8401).